The primary structure comprises 779 residues: Lon protease (779 aa).

Residues 7 to 190 (VPVLFLNDSI…LLIGWTGDHL (184 aa)) enclose the Lon N-terminal domain. 352 to 359 (GPPGVGKT) lines the ATP pocket. The region spanning 589-769 (TAVPGVATGL…ADIIAAALEP (181 aa)) is the Lon proteolytic domain. Active-site residues include Ser-675 and Lys-718.

The protein belongs to the peptidase S16 family. In terms of assembly, homohexamer. Organized in a ring with a central cavity. Oligomerization is Mg(2+)-dependent.

The protein localises to the cytoplasm. It catalyses the reaction Hydrolysis of proteins in presence of ATP.. Stimulated by unfolded protein. Its function is as follows. ATP-dependent serine protease that mediates the selective degradation of mutant and abnormal proteins as well as certain short-lived regulatory proteins. Required for cellular homeostasis and for survival from DNA damage and developmental changes induced by stress. Degrades polypeptides processively to yield small peptide fragments that are 5 to 10 amino acids long. Binds to DNA in a double-stranded, site-specific manner. The polypeptide is Lon protease (Mycolicibacterium smegmatis (Mycobacterium smegmatis)).